The following is a 305-amino-acid chain: tRNA dimethylallyltransferase (305 aa).

ATP is bound at residue 9-16 (GPTAVGKT). 11–16 (TAVGKT) is a binding site for substrate. An interaction with substrate tRNA region spans residues 34–37 (DSRQ).

This sequence belongs to the IPP transferase family. In terms of assembly, monomer. Mg(2+) serves as cofactor.

It carries out the reaction adenosine(37) in tRNA + dimethylallyl diphosphate = N(6)-dimethylallyladenosine(37) in tRNA + diphosphate. Catalyzes the transfer of a dimethylallyl group onto the adenine at position 37 in tRNAs that read codons beginning with uridine, leading to the formation of N6-(dimethylallyl)adenosine (i(6)A). The protein is tRNA dimethylallyltransferase of Roseiflexus sp. (strain RS-1).